Here is a 513-residue protein sequence, read N- to C-terminus: 2,3-bisphosphoglycerate-independent phosphoglycerate mutase (513 aa).

Mn(2+)-binding residues include aspartate 15 and serine 65. The active-site Phosphoserine intermediate is serine 65. Substrate contacts are provided by residues histidine 126, 156 to 157 (RD), arginine 188, arginine 194, 263 to 266 (RADR), and lysine 337. Aspartate 402, histidine 406, aspartate 443, histidine 444, and histidine 461 together coordinate Mn(2+).

Belongs to the BPG-independent phosphoglycerate mutase family. Monomer. It depends on Mn(2+) as a cofactor.

The enzyme catalyses (2R)-2-phosphoglycerate = (2R)-3-phosphoglycerate. The protein operates within carbohydrate degradation; glycolysis; pyruvate from D-glyceraldehyde 3-phosphate: step 3/5. Catalyzes the interconversion of 2-phosphoglycerate and 3-phosphoglycerate. The protein is 2,3-bisphosphoglycerate-independent phosphoglycerate mutase of Moorella thermoacetica (strain ATCC 39073 / JCM 9320).